The primary structure comprises 271 residues: Phosphatidylinositol transfer protein beta isoform (271 aa).

Lysine 215 carries the post-translational modification N6-acetyllysine. At serine 262 the chain carries Phosphoserine.

The protein belongs to the PtdIns transfer protein family. PI transfer class I subfamily. In terms of processing, constitutive phosphorylation of Ser-262 has no effect on phospholipid transfer activity but is required for Golgi targeting.

It is found in the golgi apparatus. The protein resides in the golgi apparatus membrane. The protein localises to the endoplasmic reticulum membrane. The enzyme catalyses a 1,2-diacyl-sn-glycero-3-phosphocholine(in) = a 1,2-diacyl-sn-glycero-3-phosphocholine(out). It catalyses the reaction a 1,2-diacyl-sn-glycero-3-phospho-(1D-myo-inositol)(in) = a 1,2-diacyl-sn-glycero-3-phospho-(1D-myo-inositol)(out). The catalysed reaction is an N-(acyl)-sphingosylphosphocholine(in) = an N-(acyl)-sphingosylphosphocholine(out). Functionally, catalyzes the transfer of phosphatidylinositol, phosphatidylcholine and sphingomyelin between membranes. Required for COPI-mediated retrograde transport from the Golgi to the endoplasmic reticulum; phosphatidylinositol and phosphatidylcholine transfer activity is essential for this function. In Bos taurus (Bovine), this protein is Phosphatidylinositol transfer protein beta isoform (PITPNB).